A 153-amino-acid chain; its full sequence is Putative pre-16S rRNA nuclease (153 aa).

Belongs to the YqgF nuclease family.

Its subcellular location is the cytoplasm. Its function is as follows. Could be a nuclease involved in processing of the 5'-end of pre-16S rRNA. The protein is Putative pre-16S rRNA nuclease of Koribacter versatilis (strain Ellin345).